The primary structure comprises 635 residues: Probable ethylene response sensor 2 (635 aa).

3 helical membrane-spanning segments follow: residues 24-44 (ISDFFIALAYFSIPLELIYFV), 59-79 (FGAFIVLCGATHLINLWTFAI), and 94-114 (ATAVVSCITALMLVHIIPDLL). Cu cation contacts are provided by Cys-66 and His-70. The region spanning 159–308 (DRHTILRTTL…VVADQVAVAL (150 aa)) is the GAF domain. The 239-residue stretch at 351–589 (VMNHEMRTPM…MFFVKLGMPE (239 aa)) folds into the Histidine kinase domain. Phosphohistidine; by autocatalysis is present on His-354.

Belongs to the ethylene receptor family. Homodimer. The cofactor is Cu cation. As to expression, expressed in anthers and hulls.

Its subcellular location is the endoplasmic reticulum membrane. The catalysed reaction is ATP + protein L-histidine = ADP + protein N-phospho-L-histidine.. Its function is as follows. Ethylene receptor related to bacterial two-component regulators. Acts as a negative regulator of ethylene signaling. May play a role in the regulation of flowering by up-regulating GI (GIGANTEA) and RCN1 and regulate starch accumulation by down-regulating the alpha-amylase AMY3D. The sequence is that of Probable ethylene response sensor 2 from Oryza sativa subsp. indica (Rice).